The following is a 164-amino-acid chain: Protein SprT (164 aa).

A SprT-like domain is found at 13-156 (YQQAEAFFKR…LCKRCREILV (144 aa)). His69 is a binding site for Zn(2+). Glu70 is a catalytic residue. His73 lines the Zn(2+) pocket.

It belongs to the SprT family. Zn(2+) is required as a cofactor.

The protein localises to the cytoplasm. The chain is Protein SprT from Pseudomonas putida (strain ATCC 700007 / DSM 6899 / JCM 31910 / BCRC 17059 / LMG 24140 / F1).